A 49-amino-acid chain; its full sequence is Large ribosomal subunit protein bL33C (49 aa).

The disordered stretch occupies residues 20–49 (NKNKRNNPDRLEKQKYCPRERKVTLHRETK). The segment covering 25–49 (NNPDRLEKQKYCPRERKVTLHRETK) has biased composition (basic and acidic residues).

Belongs to the bacterial ribosomal protein bL33 family.

This is Large ribosomal subunit protein bL33C (rpmG3) from Enterococcus faecalis (strain ATCC 700802 / V583).